A 386-amino-acid chain; its full sequence is Tryptophan--tRNA ligase (386 aa).

The short motif at 82-90 is the 'HIGH' region element; it reads PSGPMHIGH. The 'KMSKS' region signature appears at 253–257; it reads KMSAS.

Belongs to the class-I aminoacyl-tRNA synthetase family.

The protein resides in the cytoplasm. The enzyme catalyses tRNA(Trp) + L-tryptophan + ATP = L-tryptophyl-tRNA(Trp) + AMP + diphosphate + H(+). In Pyrococcus horikoshii (strain ATCC 700860 / DSM 12428 / JCM 9974 / NBRC 100139 / OT-3), this protein is Tryptophan--tRNA ligase.